The primary structure comprises 137 residues: Large ribosomal subunit protein uL16 (137 aa).

It belongs to the universal ribosomal protein uL16 family. Part of the 50S ribosomal subunit.

Binds 23S rRNA and is also seen to make contacts with the A and possibly P site tRNAs. This Nitratidesulfovibrio vulgaris (strain ATCC 29579 / DSM 644 / CCUG 34227 / NCIMB 8303 / VKM B-1760 / Hildenborough) (Desulfovibrio vulgaris) protein is Large ribosomal subunit protein uL16.